The primary structure comprises 156 residues: MPRKGPVVRREIPEDPVYSSRVVSQLIGRVLLSGKKSLAQRIVYSALDKVSMKASEDPVSVLRKALDNVRPSLEVRSRRVGGSTYQVPVPVRSHRADALAIRWLTVYSRARREKSMVDRLASEILDASNGVGATVKCKEDTHRMAESNRAFAHYRW.

The protein belongs to the universal ribosomal protein uS7 family. In terms of assembly, part of the 30S ribosomal subunit. Contacts proteins S9 and S11.

In terms of biological role, one of the primary rRNA binding proteins, it binds directly to 16S rRNA where it nucleates assembly of the head domain of the 30S subunit. Is located at the subunit interface close to the decoding center, probably blocks exit of the E-site tRNA. In Tropheryma whipplei (strain TW08/27) (Whipple's bacillus), this protein is Small ribosomal subunit protein uS7.